The chain runs to 470 residues: Uronate isomerase (470 aa).

This sequence belongs to the metallo-dependent hydrolases superfamily. Uronate isomerase family.

It catalyses the reaction D-glucuronate = D-fructuronate. The catalysed reaction is aldehydo-D-galacturonate = keto-D-tagaturonate. The protein operates within carbohydrate metabolism; pentose and glucuronate interconversion. In Salmonella arizonae (strain ATCC BAA-731 / CDC346-86 / RSK2980), this protein is Uronate isomerase.